A 231-amino-acid chain; its full sequence is Fibrillarin-like rRNA/tRNA 2'-O-methyltransferase (231 aa).

Residues 89–90 (TT), 108–109 (EF), 133–134 (DA), and 153–156 (DIAQ) each bind S-adenosyl-L-methionine.

This sequence belongs to the methyltransferase superfamily. Fibrillarin family. As to quaternary structure, interacts with nop5. Component of box C/D small ribonucleoprotein (sRNP) particles that contain rpl7ae, FlpA and nop5, plus a guide RNA.

Functionally, involved in pre-rRNA and tRNA processing. Utilizes the methyl donor S-adenosyl-L-methionine to catalyze the site-specific 2'-hydroxyl methylation of ribose moieties in rRNA and tRNA. Site specificity is provided by a guide RNA that base pairs with the substrate. Methylation occurs at a characteristic distance from the sequence involved in base pairing with the guide RNA. The sequence is that of Fibrillarin-like rRNA/tRNA 2'-O-methyltransferase from Sulfolobus acidocaldarius (strain ATCC 33909 / DSM 639 / JCM 8929 / NBRC 15157 / NCIMB 11770).